The chain runs to 168 residues: Transcriptional regulator MraZ (168 aa).

SpoVT-AbrB domains follow at residues 8–51 and 90–140; these read EYNQ…GGDR and ALNM…KADT.

The protein belongs to the MraZ family. As to quaternary structure, forms oligomers.

It localises to the cytoplasm. The protein resides in the nucleoid. The protein is Transcriptional regulator MraZ of Cereibacter sphaeroides (strain ATCC 17029 / ATH 2.4.9) (Rhodobacter sphaeroides).